A 338-amino-acid chain; its full sequence is MIEIEKVCVDFTAGRGTPTRAVDNVSLHIAAGEIFGIVGTSGAGKSTLLRTLNALTRPSQGRVNVNGVEISALDGKALRQARQRIGMIFQHFNLMHTRTVAQNVAFSLKAAGWERSKIAPRVAEILTLVGLADKANRFPVQLSGGQKQRVGIARAIANHPDVLLCDEPTSALDLETSATILALLRQINAQLGITIVLITHEMNVIKSICDRVAVMSGGKVVESGEVFDVFAHPQHAFTQQLVSHTLNLTLPERLREHLPGQLLKILFIGDSAEQPVLSEVAIKFGVAVNILHGKIEYIGERALGILVVQLTAPHNPTAVAAAVEHIRQRTAQVEVIRG.

In terms of domain architecture, ABC transporter spans 2–242 (IEIEKVCVDF…PQHAFTQQLV (241 aa)). Residue 39–46 (GTSGAGKS) coordinates ATP.

Belongs to the ABC transporter superfamily. Methionine importer (TC 3.A.1.24) family. As to quaternary structure, the complex is composed of two ATP-binding proteins (MetN), two transmembrane proteins (MetI) and a solute-binding protein (MetQ).

It localises to the cell inner membrane. It carries out the reaction L-methionine(out) + ATP + H2O = L-methionine(in) + ADP + phosphate + H(+). It catalyses the reaction D-methionine(out) + ATP + H2O = D-methionine(in) + ADP + phosphate + H(+). Functionally, part of the ABC transporter complex MetNIQ involved in methionine import. Responsible for energy coupling to the transport system. The sequence is that of Methionine import ATP-binding protein MetN 2 from Salmonella paratyphi A (strain ATCC 9150 / SARB42).